A 115-amino-acid polypeptide reads, in one-letter code: Large ribosomal subunit protein uL18 (115 aa).

The protein belongs to the universal ribosomal protein uL18 family. Part of the 50S ribosomal subunit; part of the 5S rRNA/L5/L18/L25 subcomplex. Contacts the 5S and 23S rRNAs.

This is one of the proteins that bind and probably mediate the attachment of the 5S RNA into the large ribosomal subunit, where it forms part of the central protuberance. This Vesicomyosocius okutanii subsp. Calyptogena okutanii (strain HA) protein is Large ribosomal subunit protein uL18.